We begin with the raw amino-acid sequence, 217 residues long: 3,4-dihydroxy-2-butanone 4-phosphate synthase (217 aa).

Residues 37 to 38 (RE), D42, 150 to 154 (RGGHT), and E174 each bind D-ribulose 5-phosphate. Mg(2+) is bound at residue E38. H153 is a Mg(2+) binding site.

This sequence belongs to the DHBP synthase family. In terms of assembly, homodimer. Mg(2+) serves as cofactor. It depends on Mn(2+) as a cofactor.

It carries out the reaction D-ribulose 5-phosphate = (2S)-2-hydroxy-3-oxobutyl phosphate + formate + H(+). It participates in cofactor biosynthesis; riboflavin biosynthesis; 2-hydroxy-3-oxobutyl phosphate from D-ribulose 5-phosphate: step 1/1. Functionally, catalyzes the conversion of D-ribulose 5-phosphate to formate and 3,4-dihydroxy-2-butanone 4-phosphate. This Salmonella arizonae (strain ATCC BAA-731 / CDC346-86 / RSK2980) protein is 3,4-dihydroxy-2-butanone 4-phosphate synthase.